Reading from the N-terminus, the 499-residue chain is Cysteine--tRNA ligase (499 aa).

Residue Cys29 coordinates Zn(2+). The 'HIGH' region motif lies at 31 to 41 (VTVYDLCHLGH). Residues Cys213, His238, and Glu242 each contribute to the Zn(2+) site. The short motif at 270-274 (KMSKS) is the 'KMSKS' region element. Lys273 is a binding site for ATP.

This sequence belongs to the class-I aminoacyl-tRNA synthetase family. Monomer. Zn(2+) is required as a cofactor.

Its subcellular location is the cytoplasm. It carries out the reaction tRNA(Cys) + L-cysteine + ATP = L-cysteinyl-tRNA(Cys) + AMP + diphosphate. The protein is Cysteine--tRNA ligase of Synechococcus sp. (strain CC9902).